The following is a 90-amino-acid chain: MKPMRQKNTRAQGNKSISNALASKRKVSKNQVVFFDYRDERKLKRFINDQGKIIPRRITGLTAKEQNLLTHSVKWARFLAVIPYVADEYK.

The disordered stretch occupies residues 1–23; it reads MKPMRQKNTRAQGNKSISNALAS. Over residues 9 to 21 the composition is skewed to polar residues; it reads TRAQGNKSISNAL.

It belongs to the bacterial ribosomal protein bS18 family. In terms of assembly, part of the 30S ribosomal subunit. Forms a tight heterodimer with protein bS6.

Functionally, binds as a heterodimer with protein bS6 to the central domain of the 16S rRNA, where it helps stabilize the platform of the 30S subunit. The sequence is that of Small ribosomal subunit protein bS18 from Chlorobium luteolum (strain DSM 273 / BCRC 81028 / 2530) (Pelodictyon luteolum).